A 267-amino-acid polypeptide reads, in one-letter code: Small ribosomal subunit protein uS2 (267 aa).

The tract at residues 222-267 is disordered; sequence GKALRDQDSEEEIQNKEQDEVSQEEKDDILDEAMNEEDFEIPEDKE. Residues 223–240 are compositionally biased toward basic and acidic residues; it reads KALRDQDSEEEIQNKEQD. A compositionally biased stretch (acidic residues) spans 241-267; that stretch reads EVSQEEKDDILDEAMNEEDFEIPEDKE.

This sequence belongs to the universal ribosomal protein uS2 family.

This is Small ribosomal subunit protein uS2 from Campylobacter hominis (strain ATCC BAA-381 / DSM 21671 / CCUG 45161 / LMG 19568 / NCTC 13146 / CH001A).